A 335-amino-acid chain; its full sequence is 1D-myo-inositol 2-acetamido-2-deoxy-alpha-D-glucopyranoside deacetylase (335 aa).

The Zn(2+) site is built by histidine 19, aspartate 22, and histidine 158.

Belongs to the MshB deacetylase family. Zn(2+) is required as a cofactor.

The catalysed reaction is 1D-myo-inositol 2-acetamido-2-deoxy-alpha-D-glucopyranoside + H2O = 1D-myo-inositol 2-amino-2-deoxy-alpha-D-glucopyranoside + acetate. Functionally, catalyzes the deacetylation of 1D-myo-inositol 2-acetamido-2-deoxy-alpha-D-glucopyranoside (GlcNAc-Ins) in the mycothiol biosynthesis pathway. This chain is 1D-myo-inositol 2-acetamido-2-deoxy-alpha-D-glucopyranoside deacetylase, found in Corynebacterium urealyticum (strain ATCC 43042 / DSM 7109).